The primary structure comprises 283 residues: Protein/nucleic acid deglycase HchA (283 aa).

Zn(2+) is bound by residues His86, Glu91, and His123. The active-site Nucleophile is Cys185.

This sequence belongs to the peptidase C56 family. HchA subfamily. Homodimer.

It localises to the cytoplasm. The catalysed reaction is N(omega)-(1-hydroxy-2-oxopropyl)-L-arginyl-[protein] + H2O = lactate + L-arginyl-[protein] + H(+). The enzyme catalyses N(6)-(1-hydroxy-2-oxopropyl)-L-lysyl-[protein] + H2O = lactate + L-lysyl-[protein] + H(+). It carries out the reaction S-(1-hydroxy-2-oxopropyl)-L-cysteinyl-[protein] + H2O = lactate + L-cysteinyl-[protein] + H(+). It catalyses the reaction N(omega)-(1-hydroxy-2-oxoethyl)-L-arginyl-[protein] + H2O = L-arginyl-[protein] + glycolate + H(+). The catalysed reaction is N(6)-(1-hydroxy-2-oxoethyl)-L-lysyl-[protein] + H2O = glycolate + L-lysyl-[protein] + H(+). The enzyme catalyses S-(1-hydroxy-2-oxoethyl)-L-cysteinyl-[protein] + H2O = glycolate + L-cysteinyl-[protein] + H(+). It carries out the reaction N(2)-(1-hydroxy-2-oxopropyl)-dGTP + H2O = lactate + dGTP + H(+). It catalyses the reaction N(2)-(1-hydroxy-2-oxopropyl)-GTP + H2O = lactate + GTP + H(+). The catalysed reaction is N(2)-(1-hydroxy-2-oxopropyl)-GDP + H2O = lactate + GDP + H(+). The enzyme catalyses N(2)-(1-hydroxy-2-oxopropyl)-GMP + H2O = lactate + GMP + H(+). It carries out the reaction N(2)-(1-hydroxy-2-oxoethyl)-dGTP + H2O = dGTP + glycolate + H(+). It catalyses the reaction N(2)-(1-hydroxy-2-oxoethyl)-GTP + H2O = glycolate + GTP + H(+). The catalysed reaction is N(2)-(1-hydroxy-2-oxoethyl)-GDP + H2O = glycolate + GDP + H(+). The enzyme catalyses N(2)-(1-hydroxy-2-oxoethyl)-GMP + H2O = glycolate + GMP + H(+). It carries out the reaction an N(2)-(1-hydroxy-2-oxopropyl)-guanosine in RNA + H2O = a guanosine in RNA + lactate + H(+). It catalyses the reaction an N(2)-(1-hydroxy-2-oxopropyl)-2'-deoxyguanosine in DNA + H2O = a 2'-deoxyguanosine in DNA + lactate + H(+). The catalysed reaction is an N(2)-(1-hydroxy-2-oxoethyl)-guanosine in RNA + H2O = a guanosine in RNA + glycolate + H(+). The enzyme catalyses an N(2)-(1-hydroxy-2-oxoethyl)-2'-deoxyguanosine in DNA + H2O = a 2'-deoxyguanosine in DNA + glycolate + H(+). Protein and nucleotide deglycase that catalyzes the deglycation of the Maillard adducts formed between amino groups of proteins or nucleotides and reactive carbonyl groups of glyoxals. Thus, functions as a protein deglycase that repairs methylglyoxal- and glyoxal-glycated proteins, and releases repaired proteins and lactate or glycolate, respectively. Deglycates cysteine, arginine and lysine residues in proteins, and thus reactivates these proteins by reversing glycation by glyoxals. Acts on early glycation intermediates (hemithioacetals and aminocarbinols), preventing the formation of Schiff bases and advanced glycation endproducts (AGE). Also functions as a nucleotide deglycase able to repair glycated guanine in the free nucleotide pool (GTP, GDP, GMP, dGTP) and in DNA and RNA. Is thus involved in a major nucleotide repair system named guanine glycation repair (GG repair), dedicated to reversing methylglyoxal and glyoxal damage via nucleotide sanitization and direct nucleic acid repair. Plays an important role in protecting cells from carbonyl stress. The protein is Protein/nucleic acid deglycase HchA of Escherichia coli (strain K12 / MC4100 / BW2952).